Consider the following 88-residue polypeptide: Small ribosomal subunit protein bS20 (88 aa).

2 disordered regions span residues 1–23 and 65–88; these read MANT…VNKA and GVMH…SLSA.

Belongs to the bacterial ribosomal protein bS20 family.

In terms of biological role, binds directly to 16S ribosomal RNA. The chain is Small ribosomal subunit protein bS20 from Rhizobium meliloti (strain 1021) (Ensifer meliloti).